Consider the following 447-residue polypeptide: N-succinylarginine dihydrolase (447 aa).

Substrate is bound by residues 19 to 28 (AGLSFGNEAS), Asn110, and 137 to 138 (HR). Glu174 is an active-site residue. Arg214 provides a ligand contact to substrate. Residue His250 is part of the active site. Residues Asp252 and Asn365 each coordinate substrate. Residue Cys371 is the Nucleophile of the active site.

This sequence belongs to the succinylarginine dihydrolase family. As to quaternary structure, homodimer.

It catalyses the reaction N(2)-succinyl-L-arginine + 2 H2O + 2 H(+) = N(2)-succinyl-L-ornithine + 2 NH4(+) + CO2. It participates in amino-acid degradation; L-arginine degradation via AST pathway; L-glutamate and succinate from L-arginine: step 2/5. In terms of biological role, catalyzes the hydrolysis of N(2)-succinylarginine into N(2)-succinylornithine, ammonia and CO(2). In Acinetobacter baumannii (strain SDF), this protein is N-succinylarginine dihydrolase.